The following is a 478-amino-acid chain: ATP-dependent DNA helicase RecQ (478 aa).

A Helicase ATP-binding domain is found at 28–202 (IDCLLARRDC…VEGLNLRSPE (175 aa)). Position 41–48 (41–48 (LPTGGGKS)) interacts with ATP. A DEAH box motif is present at residues 142–145 (DEAH). The Helicase C-terminal domain maps to 229-380 (QLRRFLLKHL…RAEVLSQQIP (152 aa)). Zn(2+)-binding residues include cysteine 447, cysteine 467, cysteine 470, and cysteine 473.

The protein belongs to the helicase family. RecQ subfamily. Requires Mg(2+) as cofactor. It depends on Zn(2+) as a cofactor.

The enzyme catalyses Couples ATP hydrolysis with the unwinding of duplex DNA by translocating in the 3'-5' direction.. It carries out the reaction ATP + H2O = ADP + phosphate + H(+). Functionally, an ATP-dependent DNA helicase which unwinds DNA in a 3'-5' direction. The polypeptide is ATP-dependent DNA helicase RecQ (Synechocystis sp. (strain ATCC 27184 / PCC 6803 / Kazusa)).